Consider the following 129-residue polypeptide: Small ribosomal subunit protein uS12 (129 aa).

The residue at position 89 (D89) is a 3-methylthioaspartic acid.

Belongs to the universal ribosomal protein uS12 family. In terms of assembly, part of the 30S ribosomal subunit. Contacts proteins S8 and S17. May interact with IF1 in the 30S initiation complex.

Functionally, with S4 and S5 plays an important role in translational accuracy. In terms of biological role, interacts with and stabilizes bases of the 16S rRNA that are involved in tRNA selection in the A site and with the mRNA backbone. Located at the interface of the 30S and 50S subunits, it traverses the body of the 30S subunit contacting proteins on the other side and probably holding the rRNA structure together. The combined cluster of proteins S8, S12 and S17 appears to hold together the shoulder and platform of the 30S subunit. This Helicobacter hepaticus (strain ATCC 51449 / 3B1) protein is Small ribosomal subunit protein uS12.